We begin with the raw amino-acid sequence, 178 residues long: Fatty-acid and retinol-binding protein 1 (178 aa).

The N-terminal stretch at 1–16 (MYHRLILLALIGTTMA) is a signal peptide. Coiled-coil stretches lie at residues 67 to 89 (DAAL…ELRN) and 130 to 153 (KQAA…ELKV).

It belongs to the fatty-acid and retinol-binding protein (FARBP) family. Post-translationally, not glycosylated.

The protein resides in the secreted. Binds retinol and different fatty acids. The protein is Fatty-acid and retinol-binding protein 1 of Wuchereria bancrofti.